The following is a 414-amino-acid chain: Probable solanesyl-diphosphate synthase 3, chloroplastic (414 aa).

Residues 1–23 (MAAPSSLASSSHLSRRATAAASP) are compositionally biased toward low complexity. The segment at 1-36 (MAAPSSLASSSHLSRRATAAASPSIPPPSPPPPPQR) is disordered. The transit peptide at 1–72 (MAAPSSLASS…KPGVAAVDVP (72 aa)) directs the protein to the chloroplast. Pro residues predominate over residues 24 to 35 (SIPPPSPPPPPQ). Isopentenyl diphosphate-binding residues include Lys134, Arg137, and His172. Residues Asp179 and Asp183 each contribute to the Mg(2+) site. Arg188 contacts an all-trans-polyprenyl diphosphate. Isopentenyl diphosphate is bound at residue Arg189. An all-trans-polyprenyl diphosphate contacts are provided by Lys265, Thr266, Gln303, and Lys320.

It belongs to the FPP/GGPP synthase family. Homodimer. The cofactor is Mg(2+).

It is found in the plastid. The protein localises to the chloroplast. The catalysed reaction is 7 isopentenyl diphosphate + (2E)-geranyl diphosphate = all-trans-nonaprenyl diphosphate + 7 diphosphate. In terms of biological role, involved in providing solanesyl diphosphate for plastoquinone-9 (PQ-9) formation. This Oryza sativa subsp. japonica (Rice) protein is Probable solanesyl-diphosphate synthase 3, chloroplastic.